A 125-amino-acid polypeptide reads, in one-letter code: Neuraminyllactose-binding hemagglutinin (125 aa).

An N-acetyl-neuraminyl-alpha(2,3)-lactose binding motif region spans residues 92–97 (KRTTQK).

The protein localises to the cell outer membrane. This is Neuraminyllactose-binding hemagglutinin (hpaA) from Helicobacter acinonychis (Helicobacter acinonyx).